The chain runs to 142 residues: Large ribosomal subunit protein uL11 (142 aa).

It belongs to the universal ribosomal protein uL11 family. Part of the ribosomal stalk of the 50S ribosomal subunit. Interacts with L10 and the large rRNA to form the base of the stalk. L10 forms an elongated spine to which L12 dimers bind in a sequential fashion forming a multimeric L10(L12)X complex. One or more lysine residues are methylated.

In terms of biological role, forms part of the ribosomal stalk which helps the ribosome interact with GTP-bound translation factors. In Glaesserella parasuis serovar 5 (strain SH0165) (Haemophilus parasuis), this protein is Large ribosomal subunit protein uL11.